The primary structure comprises 395 residues: Dihydroorotate dehydrogenase (quinone), mitochondrial (395 aa).

A mitochondrion; not cleaved-targeting transit peptide spans 1–10; sequence MAWRQLRKRA. The Mitochondrial matrix segment spans residues 1 to 10; that stretch reads MAWRQLRKRA. Residues 11–30 traverse the membrane as a helical segment; it reads LDAAIILGGGGLLFTSYLTA. Residues 31-395 are Mitochondrial intermembrane-facing; that stretch reads TGDDHFYAEY…TDAIGVDHRR (365 aa). Residues 95-99 and S119 contribute to the FMN site; that span reads AGFDK. Substrate is bound at residue K99. 144–148 serves as a coordination point for substrate; sequence NRYGF. FMN is bound by residues N180 and N211. 211 to 216 contacts substrate; sequence NVSSPN. The active-site Nucleophile is the S214. Positions 254 and 282 each coordinate FMN. 283-284 contacts substrate; the sequence is NT. FMN contacts are provided by residues G305, G334, and 355 to 356; that span reads YT.

The protein belongs to the dihydroorotate dehydrogenase family. Type 2 subfamily. Monomer. Requires FMN as cofactor. In terms of processing, the uncleaved transit peptide is required for mitochondrial targeting and proper membrane integration.

The protein localises to the mitochondrion inner membrane. It catalyses the reaction (S)-dihydroorotate + a quinone = orotate + a quinol. Its pathway is pyrimidine metabolism; UMP biosynthesis via de novo pathway; orotate from (S)-dihydroorotate (quinone route): step 1/1. Its function is as follows. Catalyzes the conversion of dihydroorotate to orotate with quinone as electron acceptor. Required for UMP biosynthesis via de novo pathway. This is Dihydroorotate dehydrogenase (quinone), mitochondrial (Dhodh) from Mus musculus (Mouse).